The following is a 290-amino-acid chain: Tubulin beta-4B chain (290 aa).

The MREI motif motif lies at 1–4 (MREI). Position 11 (Gln11) interacts with GTP. Thr55 carries the post-translational modification Phosphothreonine. The residue at position 58 (Lys58) is an N6-acetyllysine. Residues Glu69, Ser138, Gly142, Thr143, Gly144, and Asn172 each contribute to the GTP site. Position 69 (Glu69) interacts with Mg(2+).

Belongs to the tubulin family. As to quaternary structure, dimer of alpha and beta chains. A typical microtubule is a hollow water-filled tube with an outer diameter of 25 nm and an inner diameter of 15 nM. Alpha-beta heterodimers associate head-to-tail to form protofilaments running lengthwise along the microtubule wall with the beta-tubulin subunit facing the microtubule plus end conferring a structural polarity. Microtubules usually have 13 protofilaments but different protofilament numbers can be found in some organisms and specialized cells. Component of sperm flagellar doublet microtubules. The cofactor is Mg(2+). Post-translationally, some glutamate residues at the C-terminus are polyglycylated, resulting in polyglycine chains on the gamma-carboxyl group. Glycylation is mainly limited to tubulin incorporated into axonemes (cilia and flagella) whereas glutamylation is prevalent in neuronal cells, centrioles, axonemes, and the mitotic spindle. Both modifications can coexist on the same protein on adjacent residues, and lowering polyglycylation levels increases polyglutamylation, and reciprocally. Cilia and flagella glycylation is required for their stability and maintenance. Flagella glycylation controls sperm motility. In terms of processing, some glutamate residues at the C-terminus are polyglutamylated, resulting in polyglutamate chains on the gamma-carboxyl group. Polyglutamylation plays a key role in microtubule severing by spastin (SPAST). SPAST preferentially recognizes and acts on microtubules decorated with short polyglutamate tails: severing activity by SPAST increases as the number of glutamates per tubulin rises from one to eight, but decreases beyond this glutamylation threshold. Glutamylation is also involved in cilia motility.

Its subcellular location is the cytoplasm. It localises to the cytoskeleton. The protein localises to the flagellum axoneme. Functionally, tubulin is the major constituent of microtubules, a cylinder consisting of laterally associated linear protofilaments composed of alpha- and beta-tubulin heterodimers. Microtubules grow by the addition of GTP-tubulin dimers to the microtubule end, where a stabilizing cap forms. Below the cap, tubulin dimers are in GDP-bound state, owing to GTPase activity of alpha-tubulin. This chain is Tubulin beta-4B chain (TUBB4B), found in Mesocricetus auratus (Golden hamster).